We begin with the raw amino-acid sequence, 432 residues long: MNYATQMEAARKGIITREMETVARKEMVDPAKLRELIAEGRVVIPANKNHASLDPCGIGQGLRTKINVNLGVSRDCCNIGMELEKARLAIELKADAIMDLSCYGRTEEFRRRLIEMSPAAVGTVPVYDAVGFYGKELKEISAEEFLGVVEKHAQDGVDFMTIHAGINRETAARFKKNPRLTNIVSRGGSLLFAWMELNGRENPFYEYFDELLEICRKYDVTISLGDACRPGSVKDATDASQIQELIVLGELTKRAWEKDVQVMIEGPGHMPLNEIIPNMLLEKKLCHGAPFYVLGPLVTDVAPGYDHITSAIGGAIAAASGADFLCYVTPAEHLRLPTLEDMKEGIIASRIAAHAADIAKGVPGARQWDDKMSEARRNLDWQKMFELALDPEKARRYRAESQPESEDTCTMCGKMCAVRNMNRVLSGAGPDG.

Residues asparagine 69, methionine 98, tyrosine 127, histidine 163, 185–187, 226–229, and glutamate 265 contribute to the substrate site; these read SRG and DACR. Zn(2+) is bound at residue histidine 269. Tyrosine 292 serves as a coordination point for substrate. Histidine 333 lines the Zn(2+) pocket. [4Fe-4S] cluster contacts are provided by cysteine 409, cysteine 412, and cysteine 416.

It belongs to the ThiC family. [4Fe-4S] cluster is required as a cofactor.

It catalyses the reaction 5-amino-1-(5-phospho-beta-D-ribosyl)imidazole + S-adenosyl-L-methionine = 4-amino-2-methyl-5-(phosphooxymethyl)pyrimidine + CO + 5'-deoxyadenosine + formate + L-methionine + 3 H(+). It participates in cofactor biosynthesis; thiamine diphosphate biosynthesis. In terms of biological role, catalyzes the synthesis of the hydroxymethylpyrimidine phosphate (HMP-P) moiety of thiamine from aminoimidazole ribotide (AIR) in a radical S-adenosyl-L-methionine (SAM)-dependent reaction. This is Phosphomethylpyrimidine synthase from Pelotomaculum thermopropionicum (strain DSM 13744 / JCM 10971 / SI).